A 380-amino-acid chain; its full sequence is Cytochrome b (380 aa).

A run of 4 helical transmembrane segments spans residues 34-54 (FGSL…LLAM), 78-99 (WLIR…YMHI), 114-134 (WNTG…GYVL), and 179-199 (FFAL…IHLT). Positions 84 and 98 each coordinate heme b. Residues His-183 and His-197 each coordinate heme b. Position 202 (His-202) interacts with a ubiquinone. Transmembrane regions (helical) follow at residues 227–247 (LKDI…ALFS), 289–309 (LGGV…PLLH), 321–341 (LSQL…WIGS), and 348–368 (FIII…ILFP).

This sequence belongs to the cytochrome b family. In terms of assembly, the cytochrome bc1 complex contains 11 subunits: 3 respiratory subunits (MT-CYB, CYC1 and UQCRFS1), 2 core proteins (UQCRC1 and UQCRC2) and 6 low-molecular weight proteins (UQCRH/QCR6, UQCRB/QCR7, UQCRQ/QCR8, UQCR10/QCR9, UQCR11/QCR10 and a cleavage product of UQCRFS1). This cytochrome bc1 complex then forms a dimer. Heme b serves as cofactor.

The protein resides in the mitochondrion inner membrane. In terms of biological role, component of the ubiquinol-cytochrome c reductase complex (complex III or cytochrome b-c1 complex) that is part of the mitochondrial respiratory chain. The b-c1 complex mediates electron transfer from ubiquinol to cytochrome c. Contributes to the generation of a proton gradient across the mitochondrial membrane that is then used for ATP synthesis. This is Cytochrome b (MT-CYB) from Oceanodroma furcata (Fork-tailed storm-petrel).